The following is a 364-amino-acid chain: Alanine racemase (364 aa).

The active-site Proton acceptor; specific for D-alanine is Lys-35. N6-(pyridoxal phosphate)lysine is present on Lys-35. Position 131 (Arg-131) interacts with substrate. The active-site Proton acceptor; specific for L-alanine is the Tyr-256. Met-304 is a binding site for substrate.

Belongs to the alanine racemase family. Pyridoxal 5'-phosphate serves as cofactor.

It carries out the reaction L-alanine = D-alanine. The protein operates within amino-acid biosynthesis; D-alanine biosynthesis; D-alanine from L-alanine: step 1/1. In terms of biological role, catalyzes the interconversion of L-alanine and D-alanine. May also act on other amino acids. In Halorhodospira halophila (strain DSM 244 / SL1) (Ectothiorhodospira halophila (strain DSM 244 / SL1)), this protein is Alanine racemase (alr).